Consider the following 582-residue polypeptide: Protein alan shepard (582 aa).

Pro residues predominate over residues 1–12; the sequence is MHPRYSPAPPPQ. Positions 1 to 73 are disordered; that stretch reads MHPRYSPAPP…AAPPTSRSAF (73 aa). Tyr-5 is subject to Phosphotyrosine. Over residues 13 to 24 the composition is skewed to low complexity; it reads QQQQMGGPPHQQ. Gly residues predominate over residues 25-35; the sequence is QGGGGGGGGSM. The span at 37-57 shows a compositional bias: polar residues; sequence GPSNAQQLPPQIPRSQNYSNG. Residues 58–72 are compositionally biased toward low complexity; sequence SSSSAAAAPPTSRSA. Tyr-125 and Tyr-142 each carry phosphotyrosine. Residues 164–225 form a disordered region; that stretch reads PATTTYGQRV…TVQNQNQQGG (62 aa). Low complexity predominate over residues 178–225; the sequence is SPSNTNSSSSSNTGSQSGTLSTSLSNTTNTNTNMGPNGTVQNQNQQGG. 2 RRM domains span residues 231–304 and 310–389; these read TNLY…MAKQ and TNLY…FADG. The disordered stretch occupies residues 555 to 582; the sequence is PMTDSEQASTAASPDEAYTQYPHQAAPK.

Functionally, has a role in the perception of gravity. The polypeptide is Protein alan shepard (Drosophila erecta (Fruit fly)).